Reading from the N-terminus, the 311-residue chain is 4-hydroxy-3-methylbut-2-enyl diphosphate reductase (311 aa).

[4Fe-4S] cluster is bound at residue cysteine 12. (2E)-4-hydroxy-3-methylbut-2-enyl diphosphate contacts are provided by histidine 41 and histidine 74. Residues histidine 41 and histidine 74 each contribute to the dimethylallyl diphosphate site. Positions 41 and 74 each coordinate isopentenyl diphosphate. Cysteine 96 contacts [4Fe-4S] cluster. Histidine 124 lines the (2E)-4-hydroxy-3-methylbut-2-enyl diphosphate pocket. Histidine 124 serves as a coordination point for dimethylallyl diphosphate. Histidine 124 serves as a coordination point for isopentenyl diphosphate. The Proton donor role is filled by glutamate 126. Threonine 167 serves as a coordination point for (2E)-4-hydroxy-3-methylbut-2-enyl diphosphate. Position 197 (cysteine 197) interacts with [4Fe-4S] cluster. Residues serine 225, serine 226, asparagine 227, and serine 269 each coordinate (2E)-4-hydroxy-3-methylbut-2-enyl diphosphate. Dimethylallyl diphosphate-binding residues include serine 225, serine 226, asparagine 227, and serine 269. The isopentenyl diphosphate site is built by serine 225, serine 226, asparagine 227, and serine 269.

It belongs to the IspH family. [4Fe-4S] cluster is required as a cofactor.

The catalysed reaction is isopentenyl diphosphate + 2 oxidized [2Fe-2S]-[ferredoxin] + H2O = (2E)-4-hydroxy-3-methylbut-2-enyl diphosphate + 2 reduced [2Fe-2S]-[ferredoxin] + 2 H(+). It catalyses the reaction dimethylallyl diphosphate + 2 oxidized [2Fe-2S]-[ferredoxin] + H2O = (2E)-4-hydroxy-3-methylbut-2-enyl diphosphate + 2 reduced [2Fe-2S]-[ferredoxin] + 2 H(+). The protein operates within isoprenoid biosynthesis; dimethylallyl diphosphate biosynthesis; dimethylallyl diphosphate from (2E)-4-hydroxy-3-methylbutenyl diphosphate: step 1/1. It functions in the pathway isoprenoid biosynthesis; isopentenyl diphosphate biosynthesis via DXP pathway; isopentenyl diphosphate from 1-deoxy-D-xylulose 5-phosphate: step 6/6. In terms of biological role, catalyzes the conversion of 1-hydroxy-2-methyl-2-(E)-butenyl 4-diphosphate (HMBPP) into a mixture of isopentenyl diphosphate (IPP) and dimethylallyl diphosphate (DMAPP). Acts in the terminal step of the DOXP/MEP pathway for isoprenoid precursor biosynthesis. This Aeromonas salmonicida (strain A449) protein is 4-hydroxy-3-methylbut-2-enyl diphosphate reductase.